The chain runs to 172 residues: ATP synthase subunit b (172 aa).

A helical transmembrane segment spans residues 13 to 33; it reads GINGGDILFQLVMFLILLALL.

Belongs to the ATPase B chain family. F-type ATPases have 2 components, F(1) - the catalytic core - and F(0) - the membrane proton channel. F(1) has five subunits: alpha(3), beta(3), gamma(1), delta(1), epsilon(1). F(0) has three main subunits: a(1), b(2) and c(10-14). The alpha and beta chains form an alternating ring which encloses part of the gamma chain. F(1) is attached to F(0) by a central stalk formed by the gamma and epsilon chains, while a peripheral stalk is formed by the delta and b chains.

The protein resides in the cell membrane. Functionally, f(1)F(0) ATP synthase produces ATP from ADP in the presence of a proton or sodium gradient. F-type ATPases consist of two structural domains, F(1) containing the extramembraneous catalytic core and F(0) containing the membrane proton channel, linked together by a central stalk and a peripheral stalk. During catalysis, ATP synthesis in the catalytic domain of F(1) is coupled via a rotary mechanism of the central stalk subunits to proton translocation. In terms of biological role, component of the F(0) channel, it forms part of the peripheral stalk, linking F(1) to F(0). The protein is ATP synthase subunit b of Priestia megaterium (strain ATCC 12872 / QMB1551) (Bacillus megaterium).